Reading from the N-terminus, the 491-residue chain is Cytochrome P450 2B4 (491 aa).

A Phosphoserine; by PKA modification is found at Ser128. Cys436 is a binding site for heme.

Belongs to the cytochrome P450 family. Heme serves as cofactor.

Its subcellular location is the endoplasmic reticulum membrane. It localises to the microsome membrane. The enzyme catalyses an organic molecule + reduced [NADPH--hemoprotein reductase] + O2 = an alcohol + oxidized [NADPH--hemoprotein reductase] + H2O + H(+). Cytochromes P450 are a group of heme-thiolate monooxygenases. In liver microsomes, this enzyme is involved in an NADPH-dependent electron transport pathway. It oxidizes a variety of structurally unrelated compounds, including steroids, fatty acids, and xenobiotics. In the epoxidation of arachidonic acid it has a unique preference for the 5,6-olefin. In Oryctolagus cuniculus (Rabbit), this protein is Cytochrome P450 2B4 (CYP2B4).